The primary structure comprises 369 residues: Anhydro-N-acetylmuramic acid kinase (369 aa).

12-19 serves as a coordination point for ATP; it reads GTSMDGVD.

This sequence belongs to the anhydro-N-acetylmuramic acid kinase family.

The enzyme catalyses 1,6-anhydro-N-acetyl-beta-muramate + ATP + H2O = N-acetyl-D-muramate 6-phosphate + ADP + H(+). It participates in amino-sugar metabolism; 1,6-anhydro-N-acetylmuramate degradation. The protein operates within cell wall biogenesis; peptidoglycan recycling. Catalyzes the specific phosphorylation of 1,6-anhydro-N-acetylmuramic acid (anhMurNAc) with the simultaneous cleavage of the 1,6-anhydro ring, generating MurNAc-6-P. Is required for the utilization of anhMurNAc either imported from the medium or derived from its own cell wall murein, and thus plays a role in cell wall recycling. This is Anhydro-N-acetylmuramic acid kinase from Shewanella amazonensis (strain ATCC BAA-1098 / SB2B).